The primary structure comprises 295 residues: Gamma-glutamyl-L-1-hydroxyisopropylamide hydrolase (295 aa).

In terms of domain architecture, Glutamine amidotransferase type-1 spans 5-221; it reads RILICDGNTE…LRESARSLVE (217 aa). The active-site Nucleophile is C104. Active-site residues include H200 and E202.

The catalysed reaction is gamma-L-glutamyl-L-alaninol + H2O = L-alaninol + L-glutamate. Its function is as follows. Involved in the degradation of isopropylamine, which is a constituent of the herbicides atrazine. Catalyzes the hydrolysis of gamma-glutamyl-L-alaninol (GALO) to L-alaninol and L-glutamate. It can also uses gamma-glutamyl-isopropylamide, gamma-glutamyl-ethylamide, L-glutamine, and gamma-glutamyl-p-nitroanilide. The sequence is that of Gamma-glutamyl-L-1-hydroxyisopropylamide hydrolase (ipuF) from Pseudomonas sp.